Here is a 298-residue protein sequence, read N- to C-terminus: 3-deoxy-manno-octulosonate cytidylyltransferase (298 aa).

The helical transmembrane segment at 22–42 (VWVLHGLALGAAAAAAAVAYL) threads the bilayer.

This sequence belongs to the KdsB family. It depends on Mg(2+) as a cofactor. As to expression, ubiquitous.

It is found in the membrane. The enzyme catalyses 3-deoxy-alpha-D-manno-oct-2-ulosonate + CTP = CMP-3-deoxy-beta-D-manno-octulosonate + diphosphate. Its pathway is nucleotide-sugar biosynthesis; CMP-3-deoxy-D-manno-octulosonate biosynthesis; CMP-3-deoxy-D-manno-octulosonate from 3-deoxy-D-manno-octulosonate and CTP: step 1/1. Its function is as follows. Catalyzes the production of the sugar nucleotide CMP-3-deoxy-D-manno-octulosonate (CMP-KDO). CTP is the preferred nucleotide donor, and it can partially be replaced with UTP but not with ATP. Activates KDO during the biosynthesis of rhamnogalacturonan II (RG-II), a structurally complex pectic polysaccharide of the primary cell wall. RG-II is essential for the cell wall integrity of rapidly growing tissues and pollen tube growth and elongation. In Zea mays (Maize), this protein is 3-deoxy-manno-octulosonate cytidylyltransferase.